The primary structure comprises 367 residues: Glutamate 5-kinase (367 aa).

An ATP-binding site is contributed by Lys17. Residues Ser57, Asp144, and Asn156 each contribute to the substrate site. Residues 176–177 (SD) and 217–223 (TGGMTSK) each bind ATP. Residues 279-357 (AGALTLDEGA…SELPGELRRP (79 aa)) form the PUA domain.

This sequence belongs to the glutamate 5-kinase family.

The protein resides in the cytoplasm. It catalyses the reaction L-glutamate + ATP = L-glutamyl 5-phosphate + ADP. It functions in the pathway amino-acid biosynthesis; L-proline biosynthesis; L-glutamate 5-semialdehyde from L-glutamate: step 1/2. Catalyzes the transfer of a phosphate group to glutamate to form L-glutamate 5-phosphate. This is Glutamate 5-kinase from Mycobacterium avium (strain 104).